Here is a 760-residue protein sequence, read N- to C-terminus: Amyloid beta precursor protein binding family B member 2 (760 aa).

Residues S123 and S160 each carry the phosphoserine modification. Disordered stretches follow at residues 177 to 295 and 324 to 351; these read QNLG…LPPG and PADL…KQPW. Composition is skewed to polar residues over residues 212–230 and 261–275; these read NKPQ…SSSP and SWTT…PSSP. One can recognise a WW domain in the interval 290 to 322; it reads PDLPPGWKRVNDIAGTYYWHIPTGTTQWERPVS. Phosphoserine is present on residues S334, S409, and S412. PID domains lie at 413–580 and 586–738; these read DPEA…LQVD and TELV…VTTN.

As to quaternary structure, interacts (via C-terminus) with APP (via C-terminus). Interacts with APLP2 (via cytoplasmic domain). As to expression, expressed in the brain, retinal lens and muscle cells (at protein level).

It localises to the endoplasmic reticulum. The protein resides in the golgi apparatus. The protein localises to the early endosome. In terms of biological role, plays a role in the maintenance of lens transparency, and may also play a role in muscle cell strength. Involved in hippocampal neurite branching and neuromuscular junction formation, as a result plays a role in spatial memory functioning. Activates transcription of APP. This is Amyloid beta precursor protein binding family B member 2 from Mus musculus (Mouse).